A 456-amino-acid polypeptide reads, in one-letter code: UDP-N-acetylmuramoylalanine--D-glutamate ligase (456 aa).

Residue 122–128 (GSNGKST) coordinates ATP.

The protein belongs to the MurCDEF family.

The protein resides in the cytoplasm. It carries out the reaction UDP-N-acetyl-alpha-D-muramoyl-L-alanine + D-glutamate + ATP = UDP-N-acetyl-alpha-D-muramoyl-L-alanyl-D-glutamate + ADP + phosphate + H(+). Its pathway is cell wall biogenesis; peptidoglycan biosynthesis. Its function is as follows. Cell wall formation. Catalyzes the addition of glutamate to the nucleotide precursor UDP-N-acetylmuramoyl-L-alanine (UMA). The sequence is that of UDP-N-acetylmuramoylalanine--D-glutamate ligase from Saccharophagus degradans (strain 2-40 / ATCC 43961 / DSM 17024).